We begin with the raw amino-acid sequence, 429 residues long: MFS-type efflux pump MSMEG_3705 (429 aa).

12 helical membrane passes run Ala-21–Leu-41, Ala-59–Val-79, Gly-86–Gly-106, Leu-115–Val-137, Leu-150–Leu-170, Phe-181–Val-201, Phe-228–Phe-248, Val-264–Gly-284, Leu-299–Val-319, Leu-327–Ile-347, Ala-361–Leu-381, and Ala-397–Ser-417.

Belongs to the major facilitator superfamily.

The protein resides in the cell inner membrane. In terms of biological role, probably plays a role in bacterial growth and resistance to antibiotics. The polypeptide is MFS-type efflux pump MSMEG_3705 (Mycolicibacterium smegmatis (strain ATCC 700084 / mc(2)155) (Mycobacterium smegmatis)).